Reading from the N-terminus, the 438-residue chain is Argininosuccinate lyase (438 aa).

The protein belongs to the lyase 1 family. Argininosuccinate lyase subfamily.

It localises to the cytoplasm. The enzyme catalyses 2-(N(omega)-L-arginino)succinate = fumarate + L-arginine. It functions in the pathway amino-acid biosynthesis; L-arginine biosynthesis; L-arginine from L-ornithine and carbamoyl phosphate: step 3/3. The protein is Argininosuccinate lyase of Clostridium kluyveri (strain NBRC 12016).